The following is a 505-amino-acid chain: Forkhead box protein O4 (505 aa).

Polar residues predominate over residues 1-10 (MDPGNENSAT). Disordered stretches follow at residues 1–100 (MDPG…RRNA) and 176–246 (SWWM…CSRN). Thr32 carries the post-translational modification Phosphothreonine; by PKB/AKT1. Positions 54–64 (LGEKVHTEGRS) are enriched in basic and acidic residues. The segment at residues 100 to 188 (AWGNQSYAEL…MLNPEGGKSG (89 aa)) is a DNA-binding region (fork-head). A Phosphoserine; by PKB/AKT1 modification is found at Ser197. Residues 205–216 (LRGRSKAPKKKP) show a composition bias toward basic residues. Position 262 is a phosphoserine; by PKB/AKT1 (Ser262).

Interacts with CREBBP/CBP, CTNNB1, MYOCD, SIRT1, SRF and YWHAZ. Acetylated by CREBBP/CBP and deacetylated by SIRT1. Binding of YWHAZ inhibits DNA-binding. Interacts with USP7; the interaction is enhanced in presence of hydrogen peroxide and occurs independently of TP53. Interacts with NLK, and this inhibits monoubiquitination and transcriptional activity. Interacts with FOXK1; the interaction inhibits MEF2C transactivation activity. Post-translationally, acetylation by CREBBP/CBP, which is induced by peroxidase stress, inhibits transcriptional activity. Deacetylation by SIRT1 is NAD-dependent and stimulates transcriptional activity. In terms of processing, phosphorylation by PKB/AKT1 inhibits transcriptional activity and is responsible for cytoplasmic localization. May be phosphorylated at multiple sites by NLK. Monoubiquitinated; monoubiquitination is induced by oxidative stress and reduced by deacetylase inhibitors; results in its relocalization to the nucleus and its increased transcriptional activity. Deubiquitinated by USP7; deubiquitination is induced by oxidative stress; enhances its interaction with USP7 and consequently, deubiquitination; increases its translocation to the cytoplasm and inhibits its transcriptional activity. Hydrogene-peroxide-induced ubiquitination and USP7-mediated deubiquitination have no major effect on its protein stability. In terms of tissue distribution, heart, brain, placenta, lung, liver, skeletal muscle, kidney and pancreas. Isoform zeta is most abundant in the liver, kidney, and pancreas.

The protein localises to the cytoplasm. It localises to the nucleus. Functionally, transcription factor involved in the regulation of the insulin signaling pathway. Binds to insulin-response elements (IREs) and can activate transcription of IGFBP1. Down-regulates expression of HIF1A and suppresses hypoxia-induced transcriptional activation of HIF1A-modulated genes. Also involved in negative regulation of the cell cycle. Involved in increased proteasome activity in embryonic stem cells (ESCs) by activating expression of PSMD11 in ESCs, leading to enhanced assembly of the 26S proteasome, followed by higher proteasome activity. The sequence is that of Forkhead box protein O4 (FOXO4) from Homo sapiens (Human).